The primary structure comprises 464 residues: UPF0210 protein MA_1691 (464 aa).

Belongs to the UPF0210 family.

In Methanosarcina acetivorans (strain ATCC 35395 / DSM 2834 / JCM 12185 / C2A), this protein is UPF0210 protein MA_1691.